The chain runs to 296 residues: Phosphatidylglycerol--prolipoprotein diacylglyceryl transferase (296 aa).

4 consecutive transmembrane segments (helical) span residues 10–30 (IAFS…LAAF), 57–77 (LLFY…MLFY), 92–112 (VWEG…ACWL), and 119–139 (LHFF…LGFG). Residue arginine 140 coordinates a 1,2-diacyl-sn-glycero-3-phospho-(1'-sn-glycerol). The next 3 helical transmembrane spans lie at 194-214 (QLYE…TFSM), 220-240 (YAVS…VEFV), and 254-274 (WLTM…VLLA).

The protein belongs to the Lgt family.

It is found in the cell inner membrane. The catalysed reaction is L-cysteinyl-[prolipoprotein] + a 1,2-diacyl-sn-glycero-3-phospho-(1'-sn-glycerol) = an S-1,2-diacyl-sn-glyceryl-L-cysteinyl-[prolipoprotein] + sn-glycerol 1-phosphate + H(+). The protein operates within protein modification; lipoprotein biosynthesis (diacylglyceryl transfer). Functionally, catalyzes the transfer of the diacylglyceryl group from phosphatidylglycerol to the sulfhydryl group of the N-terminal cysteine of a prolipoprotein, the first step in the formation of mature lipoproteins. The polypeptide is Phosphatidylglycerol--prolipoprotein diacylglyceryl transferase (Xanthomonas axonopodis pv. citri (strain 306)).